Here is a 1091-residue protein sequence, read N- to C-terminus: Protein CTR9 homolog (1091 aa).

The residue at position 2 (A2) is an N-acetylalanine. TPR repeat units follow at residues 90–127, 128–161, 163–195, 197–230, 232–267, 305–338, 343–376, 377–410, 412–443, 449–482, 558–591, 593–625, 640–673, 674–707, 713–746, and 749–782; these read GAYY…DMHE, PSTW…APDN, PALL…FPGC, AAVR…DPDN, EALV…YPYC, SHSF…TNNN, VFPY…YPDN, CETL…DPRD, QAFV…MKKG, IEVL…GIWI, IDAY…DDKN, NALS…TDGK, AAMR…HNSN, MYAA…ASGS, PDVW…FFYN, and SQIL…TPSN. The disordered stretch occupies residues 919–1091; it reads FQRIKEQWKS…EEEEEEEEAN (173 aa). Positions 951 to 965 are enriched in basic residues; that stretch reads ERRRKKGGKRRKKDK. 4 stretches are compositionally biased toward acidic residues: residues 974-993, 1003-1016, 1026-1035, and 1080-1091; these read DDEE…DEDA, MTTQ…DDDA, EDPDVDDDEV, and NMEEEEEEEEAN.

Component of the nuclear PAF1 complex (PAF1C), which consists of VIP2/ELF7/PAF1, VIP3/SKI8/WDR61, VIP4/LEO1, VIP5/RTF1, VIP6/ELF8/CTR9 and CDC73. Interacts with VIP3 and VIP4. As to expression, expressed in roots, leaves and shoot apex.

It localises to the nucleus. Component of the PAF1 complex (PAF1C) which is involved in histone modifications such as methylation on histone H3 'Lys-4' (H3K4me3). Involved in regulation of flowering time. Required for the expression of the MADS box genes and flowering repressors FLC, AGL27/FLM and AGL31/MAF2. Required for histone H3 trimethylation on 'Lys-4' H3K4me3 at the FLC and AGL27/FLM loci. Involved in the control of seed dormancy and germination. In Arabidopsis thaliana (Mouse-ear cress), this protein is Protein CTR9 homolog.